Consider the following 327-residue polypeptide: tRNA-dihydrouridine(20/20a) synthase (327 aa).

Residues 11-13 and glutamine 63 each bind FMN; that span reads PML. Cysteine 93 functions as the Proton donor in the catalytic mechanism. FMN is bound by residues lysine 132, histidine 165, 205 to 207, and 227 to 228; these read NGG and GR.

The protein belongs to the Dus family. DusA subfamily. It depends on FMN as a cofactor.

It catalyses the reaction 5,6-dihydrouridine(20) in tRNA + NADP(+) = uridine(20) in tRNA + NADPH + H(+). The enzyme catalyses 5,6-dihydrouridine(20) in tRNA + NAD(+) = uridine(20) in tRNA + NADH + H(+). It carries out the reaction 5,6-dihydrouridine(20a) in tRNA + NADP(+) = uridine(20a) in tRNA + NADPH + H(+). The catalysed reaction is 5,6-dihydrouridine(20a) in tRNA + NAD(+) = uridine(20a) in tRNA + NADH + H(+). Catalyzes the synthesis of 5,6-dihydrouridine (D), a modified base found in the D-loop of most tRNAs, via the reduction of the C5-C6 double bond in target uridines. Specifically modifies U20 and U20a in tRNAs. The protein is tRNA-dihydrouridine(20/20a) synthase of Vibrio cholerae serotype O1 (strain ATCC 39315 / El Tor Inaba N16961).